A 374-amino-acid chain; its full sequence is tRNA-specific 2-thiouridylase MnmA (374 aa).

ATP-binding positions include 17–24 and Met43; that span reads GMSGGVDS. The interaction with target base in tRNA stretch occupies residues 103 to 105; that stretch reads NPD. The active-site Nucleophile is Cys108. Residues Cys108 and Cys204 are joined by a disulfide bond. Gly132 contacts ATP. The tract at residues 154 to 156 is interaction with tRNA; that stretch reads KDQ. The Cysteine persulfide intermediate role is filled by Cys204. Residues 316–317 are interaction with tRNA; it reads RY.

This sequence belongs to the MnmA/TRMU family.

It localises to the cytoplasm. The catalysed reaction is S-sulfanyl-L-cysteinyl-[protein] + uridine(34) in tRNA + AH2 + ATP = 2-thiouridine(34) in tRNA + L-cysteinyl-[protein] + A + AMP + diphosphate + H(+). In terms of biological role, catalyzes the 2-thiolation of uridine at the wobble position (U34) of tRNA, leading to the formation of s(2)U34. The protein is tRNA-specific 2-thiouridylase MnmA of Pseudomonas entomophila (strain L48).